The primary structure comprises 441 residues: MGNSEMSASEVAAAKQKNVDDWLPITSSRNAKWWYSAFHNVTAMVGAGVLSLPYAMSNLGWGPGVTIMVMSWIITLYTLWQMVEMHEIVPGKRLDRYHELGQHAFGEKLGLWIVVPQQLIVEVGVDIVYMVTGGASLKKVHQLVCPDCKEIRTTFWIMIFASVHFVISHLPNFNSISIISLAAAVMSLTYSTIAWAASVHKGVHPDVDYSPRASTDVGKVFNFLNALGDVAFAYAGHNVVLEIQATIPSTPEMPSKVPMWRGVIVAYIVVAICYFPVAFLGYYIFGNSVDDNILITLEKPIWLIAMANMFVVIHVIGSYQIFAMPVFDMLETVLVKKMNFNPSFKLRFITRSLYVAFTMIVAICVPFFGGLLGFFGGFAFAPTTYYLPCIMWLVLKKPKRFGLSWTANWFCIIVGVLLTILAPIGGLRTIIINAKTYKFFS.

Residues 1 to 32 lie on the Cytoplasmic side of the membrane; that stretch reads MGNSEMSASEVAAAKQKNVDDWLPITSSRNAK. Residues 33–53 form a helical membrane-spanning segment; that stretch reads WWYSAFHNVTAMVGAGVLSLP. Over 54 to 58 the chain is Extracellular; it reads YAMSN. A helical membrane pass occupies residues 59–79; that stretch reads LGWGPGVTIMVMSWIITLYTL. The Cytoplasmic portion of the chain corresponds to 80–110; it reads WQMVEMHEIVPGKRLDRYHELGQHAFGEKLG. Residues 111–131 form a helical membrane-spanning segment; sequence LWIVVPQQLIVEVGVDIVYMV. The Extracellular segment spans residues 132-152; it reads TGGASLKKVHQLVCPDCKEIR. Residues 153–173 form a helical membrane-spanning segment; the sequence is TTFWIMIFASVHFVISHLPNF. The Cytoplasmic segment spans residues 174–175; the sequence is NS. A helical transmembrane segment spans residues 176 to 196; it reads ISIISLAAAVMSLTYSTIAWA. Residues 197–222 are Extracellular-facing; the sequence is ASVHKGVHPDVDYSPRASTDVGKVFN. Residues 223–243 form a helical membrane-spanning segment; it reads FLNALGDVAFAYAGHNVVLEI. Over 244–263 the chain is Cytoplasmic; that stretch reads QATIPSTPEMPSKVPMWRGV. Residues 264-284 traverse the membrane as a helical segment; sequence IVAYIVVAICYFPVAFLGYYI. At 285-300 the chain is on the extracellular side; that stretch reads FGNSVDDNILITLEKP. A helical transmembrane segment spans residues 301–321; that stretch reads IWLIAMANMFVVIHVIGSYQI. Topologically, residues 322-347 are cytoplasmic; the sequence is FAMPVFDMLETVLVKKMNFNPSFKLR. The chain crosses the membrane as a helical span at residues 348-370; sequence FITRSLYVAFTMIVAICVPFFGG. The Extracellular portion of the chain corresponds to 371 to 373; sequence LLG. The helical transmembrane segment at 374–396 threads the bilayer; it reads FFGGFAFAPTTYYLPCIMWLVLK. Residues 397-406 are Cytoplasmic-facing; that stretch reads KPKRFGLSWT. The helical transmembrane segment at 407–427 threads the bilayer; the sequence is ANWFCIIVGVLLTILAPIGGL. Residues 428–441 are Extracellular-facing; sequence RTIIINAKTYKFFS.

It belongs to the amino acid/polyamine transporter 2 family. Amino acid/auxin permease (AAAP) (TC 2.A.18.2) subfamily. In terms of tissue distribution, expressed in flower buds and to lower levels in leaves and stems. Not detected in roots and siliques. Restricted to the tapetum cell layer.

The protein resides in the cell membrane. With respect to regulation, inhibited by diethylstibestrol (DES), 2,4-dinitrophenol (DNP) and carbonlycyanide m-chlorophenylhydrazone (CCCP). Its function is as follows. Amino acid-proton symporter. Transporter with a broad specificity for neutral and acidic amino acids. Basic amino acids are only marginally transported. Involved in import of amino acids into the tapetum cells for synthesis of compounds important for microspore structure. This is Lysine histidine transporter 2 (LHT2) from Arabidopsis thaliana (Mouse-ear cress).